A 238-amino-acid polypeptide reads, in one-letter code: Nicotinamide/nicotinic acid mononucleotide adenylyltransferase (238 aa).

Residues S29 and F30 each coordinate NAD(+). ATP contacts are provided by H37 and K70. T107, G136, D138, W149, R168, and N199 together coordinate NAD(+). Position 204–205 (204–205) interacts with ATP; that stretch reads SR.

The protein belongs to the eukaryotic NMN adenylyltransferase family. The cofactor is a divalent metal cation.

Its subcellular location is the nucleus. The enzyme catalyses beta-nicotinamide D-ribonucleotide + ATP + H(+) = diphosphate + NAD(+). It carries out the reaction nicotinate beta-D-ribonucleotide + ATP + H(+) = deamido-NAD(+) + diphosphate. The protein operates within cofactor biosynthesis; NAD(+) biosynthesis; deamido-NAD(+) from nicotinate D-ribonucleotide: step 1/1. It participates in cofactor biosynthesis; NAD(+) biosynthesis; NAD(+) from nicotinamide D-ribonucleotide: step 1/1. Its function is as follows. Catalyzes the formation of NAD(+) from nicotinamide mononucleotide (NMN) and ATP. Can also use the deamidated form; nicotinic acid mononucleotide (NaMN) as substrate. In Arabidopsis thaliana (Mouse-ear cress), this protein is Nicotinamide/nicotinic acid mononucleotide adenylyltransferase (NMNAT).